Here is a 460-residue protein sequence, read N- to C-terminus: 3-ketoacyl-CoA synthase 7 (460 aa).

The chain crosses the membrane as a helical span at residues 21 to 41 (FHQFLVASACVLIAVFGYYFF). Residues 38–328 (YYFFKPRCII…YIISFIQRKW (291 aa)) enclose the FAE domain. Catalysis depends on residues cysteine 183, histidine 262, histidine 345, histidine 349, and asparagine 382.

This sequence belongs to the thiolase-like superfamily. Chalcone/stilbene synthases family. As to expression, expressed in flowers.

The protein resides in the membrane. The catalysed reaction is a very-long-chain acyl-CoA + malonyl-CoA + H(+) = a very-long-chain 3-oxoacyl-CoA + CO2 + CoA. It participates in lipid metabolism; fatty acid biosynthesis. In Arabidopsis thaliana (Mouse-ear cress), this protein is 3-ketoacyl-CoA synthase 7.